Here is a 328-residue protein sequence, read N- to C-terminus: Carbonic anhydrase-related protein 11 (328 aa).

The N-terminal stretch at Met-1–Ala-23 is a signal peptide. One can recognise an Alpha-carbonic anhydrase domain in the interval Asp-33–Arg-303. N-linked (GlcNAc...) asparagine glycosylation occurs at Asn-118. The segment at Arg-300–Leu-328 is disordered. Over residues Leu-319 to Leu-328 the composition is skewed to basic and acidic residues.

Belongs to the alpha-carbonic anhydrase family.

It localises to the secreted. Functionally, does not have a catalytic activity. The chain is Carbonic anhydrase-related protein 11 (CA11) from Ovis aries (Sheep).